Consider the following 428-residue polypeptide: Putative zinc metalloprotease SA1105 (428 aa).

Residue H21 coordinates Zn(2+). E22 is an active-site residue. A Zn(2+)-binding site is contributed by H25. Transmembrane regions (helical) follow at residues 172–194 (FLTL…IGLA), 309–331 (GSTL…GFSF), 352–374 (IISL…LIPI), and 401–420 (TTII…LVTW). Positions 186–269 (ALVLFIGLAY…TKSVELTPKK (84 aa)) constitute a PDZ domain.

It belongs to the peptidase M50B family. It depends on Zn(2+) as a cofactor.

Its subcellular location is the cell membrane. In Staphylococcus aureus (strain N315), this protein is Putative zinc metalloprotease SA1105.